Here is a 957-residue protein sequence, read N- to C-terminus: Dystrophin-related protein 2 (957 aa).

Spectrin repeat units follow at residues 102–179 (DHSG…EELE) and 231–337 (EQLL…QLQD). The region spanning 358–383 (WERAISPNKVPYYINHQAQTTCWDHP) is the WW domain. The segment at 605 to 661 (KHQTKCSICRQCPIKGFRYRSLKQFNVDICQTCFLTGRASKGNKLHYPIMEYYTPTT) adopts a ZZ-type; degenerate zinc-finger fold. Zn(2+) is bound by residues Cys-610, Cys-613, Cys-634, and Cys-637. Ser-748 bears the Phosphoserine mark. The span at 877 to 900 (PPTESDGSGSAGSSLASSPQQSEG) shows a compositional bias: low complexity. The tract at residues 877 to 923 (PPTESDGSGSAGSSLASSPQQSEGSHPREKGQTTPDTEAADDVGSKS) is disordered. Phosphothreonine is present on Thr-910.

In terms of assembly, interacts with PRX; this enhances phosphorylation. Identified in a dystroglycan complex that contains at least PRX, DRP2, UTRN, DMD and DAG1. As to expression, detected in fetal brain.

Its subcellular location is the postsynaptic density. The protein resides in the cell projection. It localises to the dendrite. It is found in the perikaryon. The protein localises to the cell membrane. In terms of biological role, required for normal myelination and for normal organization of the cytoplasm and the formation of Cajal bands in myelinating Schwann cells. Required for normal PRX location at appositions between the abaxonal surface of the myelin sheath and the Schwann cell plasma membrane. Possibly involved in membrane-cytoskeleton interactions of the central nervous system. The sequence is that of Dystrophin-related protein 2 (DRP2) from Homo sapiens (Human).